An 89-amino-acid polypeptide reads, in one-letter code: Small ribosomal subunit protein uS17 (89 aa).

This sequence belongs to the universal ribosomal protein uS17 family. Part of the 30S ribosomal subunit.

Functionally, one of the primary rRNA binding proteins, it binds specifically to the 5'-end of 16S ribosomal RNA. The protein is Small ribosomal subunit protein uS17 of Chlorobaculum tepidum (strain ATCC 49652 / DSM 12025 / NBRC 103806 / TLS) (Chlorobium tepidum).